The sequence spans 600 residues: NADH-quinone oxidoreductase subunit C/D (600 aa).

The interval 1-190 (MIDLMPKKNT…EPFFLNEQKE (190 aa)) is NADH dehydrogenase I subunit C. The NADH dehydrogenase I subunit D stretch occupies residues 214-600 (EFMFLNLGPN…IDFVMSDVDR (387 aa)).

This sequence in the N-terminal section; belongs to the complex I 30 kDa subunit family. The protein in the C-terminal section; belongs to the complex I 49 kDa subunit family. In terms of assembly, NDH-1 is composed of 13 different subunits. Subunits NuoB, CD, E, F, and G constitute the peripheral sector of the complex.

It is found in the cell inner membrane. The catalysed reaction is a quinone + NADH + 5 H(+)(in) = a quinol + NAD(+) + 4 H(+)(out). Its function is as follows. NDH-1 shuttles electrons from NADH, via FMN and iron-sulfur (Fe-S) centers, to quinones in the respiratory chain. The immediate electron acceptor for the enzyme in this species is believed to be ubiquinone. Couples the redox reaction to proton translocation (for every two electrons transferred, four hydrogen ions are translocated across the cytoplasmic membrane), and thus conserves the redox energy in a proton gradient. This Buchnera aphidicola subsp. Acyrthosiphon pisum (strain APS) (Acyrthosiphon pisum symbiotic bacterium) protein is NADH-quinone oxidoreductase subunit C/D.